Consider the following 143-residue polypeptide: Putative aryl-alcohol dehydrogenase AAD15 (143 aa).

The protein belongs to the aldo/keto reductase family. Aldo/keto reductase 2 subfamily.

Its function is as follows. Putative aryl-alcohol dehydrogenase. In Saccharomyces cerevisiae (strain ATCC 204508 / S288c) (Baker's yeast), this protein is Putative aryl-alcohol dehydrogenase AAD15 (AAD15).